Here is a 209-residue protein sequence, read N- to C-terminus: Kynurenine formamidase (209 aa).

Trp18 provides a ligand contact to substrate. Positions 48, 52, and 54 each coordinate Zn(2+). Residue His58 is the Proton donor/acceptor of the active site. Zn(2+)-binding residues include His160 and Glu172.

It belongs to the Cyclase 1 superfamily. KynB family. As to quaternary structure, homodimer. Requires Zn(2+) as cofactor.

The enzyme catalyses N-formyl-L-kynurenine + H2O = L-kynurenine + formate + H(+). The protein operates within amino-acid degradation; L-tryptophan degradation via kynurenine pathway; L-kynurenine from L-tryptophan: step 2/2. In terms of biological role, catalyzes the hydrolysis of N-formyl-L-kynurenine to L-kynurenine, the second step in the kynurenine pathway of tryptophan degradation. The protein is Kynurenine formamidase of Sphingopyxis alaskensis (strain DSM 13593 / LMG 18877 / RB2256) (Sphingomonas alaskensis).